We begin with the raw amino-acid sequence, 475 residues long: tRNA-2-methylthio-N(6)-dimethylallyladenosine synthase (475 aa).

The MTTase N-terminal domain maps to arginine 7–aspartate 127. [4Fe-4S] cluster-binding residues include cysteine 16, cysteine 52, cysteine 90, cysteine 168, cysteine 172, and cysteine 175. The Radical SAM core domain maps to arginine 154–glutamine 388. In terms of domain architecture, TRAM spans arginine 394 to serine 456.

This sequence belongs to the methylthiotransferase family. MiaB subfamily. In terms of assembly, monomer. It depends on [4Fe-4S] cluster as a cofactor.

It is found in the cytoplasm. The enzyme catalyses N(6)-dimethylallyladenosine(37) in tRNA + (sulfur carrier)-SH + AH2 + 2 S-adenosyl-L-methionine = 2-methylsulfanyl-N(6)-dimethylallyladenosine(37) in tRNA + (sulfur carrier)-H + 5'-deoxyadenosine + L-methionine + A + S-adenosyl-L-homocysteine + 2 H(+). Its function is as follows. Catalyzes the methylthiolation of N6-(dimethylallyl)adenosine (i(6)A), leading to the formation of 2-methylthio-N6-(dimethylallyl)adenosine (ms(2)i(6)A) at position 37 in tRNAs that read codons beginning with uridine. This is tRNA-2-methylthio-N(6)-dimethylallyladenosine synthase from Afipia carboxidovorans (strain ATCC 49405 / DSM 1227 / KCTC 32145 / OM5) (Oligotropha carboxidovorans).